The primary structure comprises 85 residues: Scratcher peptide (85 aa).

Residues 1 to 24 (MTSVQSVTCCCLLWLMLSVQPITP) form the signal peptide. The propeptide occupies 25 to 38 (GSPGPAQLSRERSF). Position 47 is a 4-carboxyglutamate (E47). D67 carries the post-translational modification Aspartic acid 1-amide. A propeptide spanning residues 68 to 85 (KRDVVSPRIRRRKRSKAM) is cleaved from the precursor.

The protein belongs to the conotoxin J superfamily. In terms of processing, contains 2 disulfide bonds. Expressed by the venom duct.

It is found in the secreted. Functionally, causes scratching in mice. This is Scratcher peptide from Conus geographus (Geography cone).